The chain runs to 352 residues: Phosphoribosylformylglycinamidine cyclo-ligase (352 aa).

This sequence belongs to the AIR synthase family.

The protein localises to the cytoplasm. The enzyme catalyses 2-formamido-N(1)-(5-O-phospho-beta-D-ribosyl)acetamidine + ATP = 5-amino-1-(5-phospho-beta-D-ribosyl)imidazole + ADP + phosphate + H(+). It participates in purine metabolism; IMP biosynthesis via de novo pathway; 5-amino-1-(5-phospho-D-ribosyl)imidazole from N(2)-formyl-N(1)-(5-phospho-D-ribosyl)glycinamide: step 2/2. The chain is Phosphoribosylformylglycinamidine cyclo-ligase from Pseudomonas fluorescens (strain ATCC BAA-477 / NRRL B-23932 / Pf-5).